We begin with the raw amino-acid sequence, 409 residues long: Elongation factor Tu, chloroplastic (409 aa).

A tr-type G domain is found at 10-214 (KPHVNIGTIG…AVDEYIPTPE (205 aa)). The interval 19 to 26 (GHVDHGKT) is G1. 19–26 (GHVDHGKT) provides a ligand contact to GTP. Thr26 serves as a coordination point for Mg(2+). Residues 60–64 (GITIN) form a G2 region. A G3 region spans residues 81–84 (DCPG). GTP is bound by residues 81 to 85 (DCPGH) and 136 to 139 (NKED). Residues 136–139 (NKED) form a G4 region. The G5 stretch occupies residues 174–176 (SAL).

Belongs to the TRAFAC class translation factor GTPase superfamily. Classic translation factor GTPase family. EF-Tu/EF-1A subfamily.

It is found in the plastid. Its subcellular location is the chloroplast. It carries out the reaction GTP + H2O = GDP + phosphate + H(+). In terms of biological role, GTP hydrolase that promotes the GTP-dependent binding of aminoacyl-tRNA to the A-site of ribosomes during protein biosynthesis. This is Elongation factor Tu, chloroplastic (tufA) from Phaeodactylum tricornutum (strain CCAP 1055/1).